The chain runs to 489 residues: Glutamyl-tRNA(Gln) amidotransferase subunit A (489 aa).

Active-site charge relay system residues include Lys-78 and Ser-153. Ser-177 (acyl-ester intermediate) is an active-site residue.

Belongs to the amidase family. GatA subfamily. As to quaternary structure, heterotrimer of A, B and C subunits.

It catalyses the reaction L-glutamyl-tRNA(Gln) + L-glutamine + ATP + H2O = L-glutaminyl-tRNA(Gln) + L-glutamate + ADP + phosphate + H(+). In terms of biological role, allows the formation of correctly charged Gln-tRNA(Gln) through the transamidation of misacylated Glu-tRNA(Gln) in organisms which lack glutaminyl-tRNA synthetase. The reaction takes place in the presence of glutamine and ATP through an activated gamma-phospho-Glu-tRNA(Gln). This chain is Glutamyl-tRNA(Gln) amidotransferase subunit A, found in Enterococcus faecalis (strain ATCC 700802 / V583).